The primary structure comprises 104 residues: L-rhamnose mutarotase (104 aa).

Tyr-18 lines the substrate pocket. Residue His-22 is the Proton donor of the active site. Residues Tyr-41 and 76–77 (WW) each bind substrate.

The protein belongs to the rhamnose mutarotase family. In terms of assembly, homodimer.

It is found in the cytoplasm. It catalyses the reaction alpha-L-rhamnose = beta-L-rhamnose. It participates in carbohydrate metabolism; L-rhamnose metabolism. In terms of biological role, involved in the anomeric conversion of L-rhamnose. The protein is L-rhamnose mutarotase of Acidiphilium cryptum (strain JF-5).